The following is a 441-amino-acid chain: Protein SPMIP7 (441 aa).

Testis specific. Expressed at the spermatid stage.

In terms of biological role, essential for normal spermatogenesis. This chain is Protein SPMIP7 (Spmip7), found in Mus musculus (Mouse).